The following is a 367-amino-acid chain: Dual specificity protein phosphatase 1 (367 aa).

Positions 20-137 constitute a Rhodanese domain; it reads GAAQCLLLDC…FSASCPELCS (118 aa). One can recognise a Tyrosine-protein phosphatase domain in the interval 173-314; sequence GPVEILSFLY…LLQFESQVLA (142 aa). Catalysis depends on Cys-258, which acts as the Phosphocysteine intermediate. Phosphoserine; by MAPK1 and MAPK3 occurs at positions 359 and 364.

The protein belongs to the protein-tyrosine phosphatase family. Non-receptor class dual specificity subfamily. Phosphorylation at Ser-359 and Ser-364 by MAPK1/ERK2 and MAPK3/ERK1 reduces its rate of degradation. In terms of processing, 'Lys-48'-linked polyubiquitinated by NEURL3, leading to proteasomal degradation.

The protein resides in the nucleus. It catalyses the reaction O-phospho-L-tyrosyl-[protein] + H2O = L-tyrosyl-[protein] + phosphate. The catalysed reaction is O-phospho-L-seryl-[protein] + H2O = L-seryl-[protein] + phosphate. The enzyme catalyses O-phospho-L-threonyl-[protein] + H2O = L-threonyl-[protein] + phosphate. Functionally, dual specificity phosphatase that dephosphorylates MAP kinase MAPK1/ERK2 on both 'Thr-183' and 'Tyr-185', regulating its activity during the meiotic cell cycle. This Mus musculus (Mouse) protein is Dual specificity protein phosphatase 1.